The primary structure comprises 76 residues: ATP synthase subunit 9, mitochondrial (76 aa).

At methionine 1 the chain carries N-formylmethionine. 2 consecutive transmembrane segments (helical) span residues 14-34 (ISTI…AALI) and 52-72 (ILGF…SFLL).

Belongs to the ATPase C chain family. As to quaternary structure, F-type ATPases have 2 components, CF(1) - the catalytic core - and CF(0) - the membrane proton channel. In yeast, the dimeric form of ATP synthase consists of 18 polypeptides: alpha, beta, gamma, delta, epsilon, 4 (B), 5 (OSCP), 6 (A), 8, 9 (C), d, E (Tim11), f, g, h, i, j and k.

The protein resides in the mitochondrion membrane. Its function is as follows. Mitochondrial membrane ATP synthase (F(1)F(0) ATP synthase or Complex V) produces ATP from ADP in the presence of a proton gradient across the membrane which is generated by electron transport complexes of the respiratory chain. F-type ATPases consist of two structural domains, F(1) - containing the extramembraneous catalytic core and F(0) - containing the membrane proton channel, linked together by a central stalk and a peripheral stalk. During catalysis, ATP synthesis in the catalytic domain of F(1) is coupled via a rotary mechanism of the central stalk subunits to proton translocation. Part of the complex F(0) domain. A homomeric c-ring of probably 10 subunits is part of the complex rotary element. In Saccharomyces paradoxus (Yeast), this protein is ATP synthase subunit 9, mitochondrial (ATP9).